A 206-amino-acid chain; its full sequence is dCTP deaminase, dUMP-forming (206 aa).

DCTP is bound by residues R117–R122, D135, T143–E145, Q163, Y177, K184, and Q188. E145 (proton donor/acceptor) is an active-site residue.

This sequence belongs to the dCTP deaminase family. Homotrimer.

The catalysed reaction is dCTP + 2 H2O = dUMP + NH4(+) + diphosphate. The protein operates within pyrimidine metabolism; dUMP biosynthesis; dUMP from dCTP: step 1/1. Functionally, bifunctional enzyme that catalyzes both the deamination of dCTP to dUTP and the hydrolysis of dUTP to dUMP without releasing the toxic dUTP intermediate. The sequence is that of dCTP deaminase, dUMP-forming from Methanococcus maripaludis (strain C7 / ATCC BAA-1331).